The following is a 197-amino-acid chain: Ribonuclease HII (197 aa).

The region spanning 9-197 (KLIAGVDEVG…APVKKALEQF (189 aa)) is the RNase H type-2 domain. A divalent metal cation-binding residues include D15, E16, and D107.

Belongs to the RNase HII family. Mn(2+) serves as cofactor. It depends on Mg(2+) as a cofactor.

Its subcellular location is the cytoplasm. It carries out the reaction Endonucleolytic cleavage to 5'-phosphomonoester.. Its function is as follows. Endonuclease that specifically degrades the RNA of RNA-DNA hybrids. The sequence is that of Ribonuclease HII (rnhB) from Haemophilus influenzae (strain ATCC 51907 / DSM 11121 / KW20 / Rd).